A 372-amino-acid chain; its full sequence is Alanine racemase (372 aa).

Catalysis depends on Lys33, which acts as the Proton acceptor; specific for D-alanine. An N6-(pyridoxal phosphate)lysine modification is found at Lys33. A substrate-binding site is contributed by Arg131. The active-site Proton acceptor; specific for L-alanine is Tyr261. Met309 serves as a coordination point for substrate.

Belongs to the alanine racemase family. Pyridoxal 5'-phosphate serves as cofactor.

The enzyme catalyses L-alanine = D-alanine. It functions in the pathway amino-acid biosynthesis; D-alanine biosynthesis; D-alanine from L-alanine: step 1/1. Catalyzes the interconversion of L-alanine and D-alanine. May also act on other amino acids. The chain is Alanine racemase (alr) from Salinispora tropica (strain ATCC BAA-916 / DSM 44818 / JCM 13857 / NBRC 105044 / CNB-440).